Reading from the N-terminus, the 42-residue chain is Photosystem II reaction center protein J (42 aa).

The helical transmembrane segment at 10–30 threads the bilayer; sequence IPLWLIGTVVGSLAIGLLAIF.

It belongs to the PsbJ family. As to quaternary structure, PSII is composed of 1 copy each of membrane proteins PsbA, PsbB, PsbC, PsbD, PsbE, PsbF, PsbH, PsbI, PsbJ, PsbK, PsbL, PsbM, PsbT, PsbX, PsbY, PsbZ, Psb30/Ycf12, at least 3 peripheral proteins of the oxygen-evolving complex and a large number of cofactors. It forms dimeric complexes.

It localises to the plastid. It is found in the chloroplast thylakoid membrane. One of the components of the core complex of photosystem II (PSII). PSII is a light-driven water:plastoquinone oxidoreductase that uses light energy to abstract electrons from H(2)O, generating O(2) and a proton gradient subsequently used for ATP formation. It consists of a core antenna complex that captures photons, and an electron transfer chain that converts photonic excitation into a charge separation. This chain is Photosystem II reaction center protein J, found in Stigeoclonium helveticum (Green alga).